Here is a 181-residue protein sequence, read N- to C-terminus: TATA-box-binding protein (181 aa).

Tandem repeats lie at residues 7–83 (IVNV…IKEL) and 98–173 (VQNM…SKTL).

It belongs to the TBP family.

Its function is as follows. General factor that plays a role in the activation of archaeal genes transcribed by RNA polymerase. Binds specifically to the TATA box promoter element which lies close to the position of transcription initiation. The polypeptide is TATA-box-binding protein (Methanococcus maripaludis (strain C6 / ATCC BAA-1332)).